The sequence spans 627 residues: 1-deoxy-D-xylulose-5-phosphate synthase (627 aa).

Residues His-80 and 121-123 each bind thiamine diphosphate; that span reads GHS. Mg(2+) is bound at residue Asp-152. Residues 153–154, Asn-181, Tyr-288, and Glu-370 contribute to the thiamine diphosphate site; that span reads GA. Mg(2+) is bound at residue Asn-181.

This sequence belongs to the transketolase family. DXPS subfamily. Homodimer. Mg(2+) serves as cofactor. Requires thiamine diphosphate as cofactor.

It carries out the reaction D-glyceraldehyde 3-phosphate + pyruvate + H(+) = 1-deoxy-D-xylulose 5-phosphate + CO2. Its pathway is metabolic intermediate biosynthesis; 1-deoxy-D-xylulose 5-phosphate biosynthesis; 1-deoxy-D-xylulose 5-phosphate from D-glyceraldehyde 3-phosphate and pyruvate: step 1/1. Functionally, catalyzes the acyloin condensation reaction between C atoms 2 and 3 of pyruvate and glyceraldehyde 3-phosphate to yield 1-deoxy-D-xylulose-5-phosphate (DXP). The chain is 1-deoxy-D-xylulose-5-phosphate synthase from Aliivibrio fischeri (strain ATCC 700601 / ES114) (Vibrio fischeri).